Here is a 467-residue protein sequence, read N- to C-terminus: MRLPREIGPIHFVGIGGIGMSGIAEVLCNLGYTVQGSDASESANVNRLREKGIAISVGHKADNIAGADVLVVSTAIKRDNPELLAARAQRIPVVRRAEMLAELMRLKSCIAIAGTHGKTTTTSMVAALLDAGDVDPTVINGGIINAYGTNARLGAGDWMVVEADESDGTFLKLPADVAVVTNVDPEHLDHFKTFDAVQDAFRIFVENVPFYGFAVMCIDHPVVQALVGKIEDRRIITYGENPQADARLLDLKPSGAGSTFKVAFRDRKAGTAHEITDLMLPMPGPHNALNAVAAIAVAHELGLSDDTIRKALAAFGGVRRRFTKTGEWNGVTIIDDYGHHPVEIAAVLKAARQSTSAKVIAVVQPHRFTRLQSLFEEFCTCFNDADTVIVADVYPAGEAPIAGIDRDHFVLGLRAHGHREVIPLQDSASLAGVVAGVARSGDYVVCLGAGNITQWAYALPGELKALG.

114 to 120 contacts ATP; the sequence is GTHGKTT.

The protein belongs to the MurCDEF family.

The protein localises to the cytoplasm. The enzyme catalyses UDP-N-acetyl-alpha-D-muramate + L-alanine + ATP = UDP-N-acetyl-alpha-D-muramoyl-L-alanine + ADP + phosphate + H(+). The protein operates within cell wall biogenesis; peptidoglycan biosynthesis. Its function is as follows. Cell wall formation. This is UDP-N-acetylmuramate--L-alanine ligase from Rhodopseudomonas palustris (strain BisB5).